Here is a 360-residue protein sequence, read N- to C-terminus: Malonyl CoA-acyl carrier protein transacylase, mitochondrial (360 aa).

The N-terminal 24 residues, 1 to 24, are a transit peptide targeting the mitochondrion; that stretch reads MKLLTFPGQGTSISISILKAIIRN. Active-site residues include Ser-105 and His-235.

It belongs to the FabD family.

Its subcellular location is the mitochondrion. It carries out the reaction holo-[ACP] + malonyl-CoA = malonyl-[ACP] + CoA. Its pathway is lipid metabolism; fatty acid biosynthesis. In terms of biological role, involved in biosynthesis of fatty acids in mitochondria. The protein is Malonyl CoA-acyl carrier protein transacylase, mitochondrial (MCT1) of Saccharomyces cerevisiae (strain ATCC 204508 / S288c) (Baker's yeast).